An 838-amino-acid chain; its full sequence is Leucine--tRNA ligase 1 (838 aa).

The short motif at 40–51 (PYPSGAGLHVGH) is the 'HIGH' region element. Positions 608–612 (KMSKS) match the 'KMSKS' region motif. Lys611 is an ATP binding site.

This sequence belongs to the class-I aminoacyl-tRNA synthetase family.

The protein localises to the cytoplasm. The enzyme catalyses tRNA(Leu) + L-leucine + ATP = L-leucyl-tRNA(Leu) + AMP + diphosphate. The polypeptide is Leucine--tRNA ligase 1 (Rhizobium johnstonii (strain DSM 114642 / LMG 32736 / 3841) (Rhizobium leguminosarum bv. viciae)).